A 156-amino-acid chain; its full sequence is Snaclec A6 (156 aa).

Positions 1 to 23 (MGRSISVSFGLLVVFLSLSGTGA) are cleaved as a signal peptide. 3 disulfide bridges follow: C27-C38, C55-C154, and C129-C146. The region spanning 34 to 155 (HEGHCYKVFN…CGKPYRFTCE (122 aa)) is the C-type lectin domain.

This sequence belongs to the snaclec family. As to quaternary structure, heterodimer; disulfide-linked. Expressed by the venom gland.

Its subcellular location is the secreted. Its function is as follows. Interferes with one step of hemostasis (modulation of platelet aggregation, or coagulation cascade, for example). The protein is Snaclec A6 of Macrovipera lebetinus (Levantine viper).